Consider the following 130-residue polypeptide: Protein ApaG (130 aa).

One can recognise an ApaG domain in the interval 3-127 (RAVTRQIEVL…FSLDSPDIRR (125 aa)).

The polypeptide is Protein ApaG (Afipia carboxidovorans (strain ATCC 49405 / DSM 1227 / KCTC 32145 / OM5) (Oligotropha carboxidovorans)).